A 217-amino-acid chain; its full sequence is Cysteine-rich protein 3 (217 aa).

Residues 3–64 form the LIM zinc-binding 1 domain; the sequence is WTCPRCQQPV…KPCYGALFGP (62 aa). Residues 84–112 form a disordered region; the sequence is PGCTTPLSPSSFSPPRPRTGLPQGKKSPP. The region spanning 122-183 is the LIM zinc-binding 2 domain; that stretch reads SLCPGCGEPV…VPCYGYLFGP (62 aa).

As to expression, expressed in most tissues, but not in skeletal muscle.

It is found in the cytoplasm. This Homo sapiens (Human) protein is Cysteine-rich protein 3 (CRIP3).